Here is a 76-residue protein sequence, read N- to C-terminus: Acyl carrier protein (76 aa).

Residues 1–76 (MDTFESVKAV…DVVAYIEANK (76 aa)) form the Carrier domain. At Ser-36 the chain carries O-(pantetheine 4'-phosphoryl)serine.

This sequence belongs to the acyl carrier protein (ACP) family. Post-translationally, 4'-phosphopantetheine is transferred from CoA to a specific serine of apo-ACP by AcpS. This modification is essential for activity because fatty acids are bound in thioester linkage to the sulfhydryl of the prosthetic group.

The protein localises to the cytoplasm. Its pathway is lipid metabolism; fatty acid biosynthesis. Functionally, carrier of the growing fatty acid chain in fatty acid biosynthesis. The protein is Acyl carrier protein of Helicobacter hepaticus (strain ATCC 51449 / 3B1).